The following is a 562-amino-acid chain: TBC1 domain family member 24 (562 aa).

Residues lysine 36, arginine 40, lysine 238, arginine 242, and 293–297 (RLFSR) each bind a 1,2-diacyl-sn-glycero-3-phospho-(1D-myo-inositol). A Rab-GAP TBC domain is found at 42–259 (GHWAKSHSLR…FFHKVRGGQP (218 aa)). Positions 337-549 (EIVSVKEMRD…ISIIEVWGFK (213 aa)) constitute a TLDc domain. Residues 451 to 464 (ASSGDNDANSSQSA) are compositionally biased toward low complexity. Residues 451 to 471 (ASSGDNDANSSQSAKDGIDPS) form a disordered region.

In terms of assembly, interacts with ARF6.

The protein resides in the cell membrane. It is found in the cytoplasm. It localises to the cytoplasmic vesicle membrane. The protein localises to the presynapse. Its function is as follows. May act as a GTPase-activating protein for Rab family protein(s). Involved in neuronal projections development, probably through a negative modulation of ARF6 function. Involved in the regulation of synaptic vesicle trafficking. This chain is TBC1 domain family member 24 (tbc1d24), found in Xenopus tropicalis (Western clawed frog).